An 81-amino-acid chain; its full sequence is Small ribosomal subunit protein bS16 (81 aa).

This sequence belongs to the bacterial ribosomal protein bS16 family.

The protein is Small ribosomal subunit protein bS16 of Colwellia psychrerythraea (strain 34H / ATCC BAA-681) (Vibrio psychroerythus).